Reading from the N-terminus, the 503-residue chain is Surface lipoprotein assembly modifier (503 aa).

An N-terminal signal peptide occupies residues 1 to 34 (MTITPVYTTFTPTKTPIKFFMAGLTFLIAHISHA). An N-terminal domain region spans residues 38 to 220 (RTDNQEPINQ…QYRQALKQRD (183 aa)). The TPR repeat unit spans residues 136–169 (ILLGYANALAALDKGNAKKAIDELRRIIAIMPEY). Positions 221 to 503 (SWTWQVGMNL…QMFVEFSRIF (283 aa)) are C-terminal probable beta barrel. 14 consecutive transmembrane segments (beta stranded) span residues 222–232 (WTWQVGMNLAK), 259–270 (LSYQLGADKKWS), 275–285 (AYVGANAQIYG), 299–308 (GRLGANLGFA), 313–322 (DLSIETYGEK), 334–343 (IGIRMSVDYR), 348–358 (FQSLNAIDISR), 372–382 (TLYSTSLIYYP), 387–396 (YYLLGADFYD), 410–419 (RGIRTAWGQE), 424–434 (LSSRAQISINK), 454–463 (MQASLSLWHR), 470–479 (ITPRLTISTN), and 493–503 (NQMFVEFSRIF).

It belongs to the Slam family.

Its subcellular location is the cell outer membrane. Its function is as follows. Required for correct export to the cell surface of some cell outer membrane lipoproteins (tested with TpbP) upon heterologous expression in E.coli and probably also in Moraxella. The polypeptide is Surface lipoprotein assembly modifier (Moraxella catarrhalis (Branhamella catarrhalis)).